The primary structure comprises 76 residues: Large ribosomal subunit protein bL31 (76 aa).

Belongs to the bacterial ribosomal protein bL31 family. Type A subfamily. Part of the 50S ribosomal subunit.

Functionally, binds the 23S rRNA. The chain is Large ribosomal subunit protein bL31 from Rhizorhabdus wittichii (strain DSM 6014 / CCUG 31198 / JCM 15750 / NBRC 105917 / EY 4224 / RW1) (Sphingomonas wittichii).